Here is a 197-residue protein sequence, read N- to C-terminus: 3-isopropylmalate dehydratase small subunit (197 aa).

This sequence belongs to the LeuD family. LeuD type 1 subfamily. In terms of assembly, heterodimer of LeuC and LeuD.

It catalyses the reaction (2R,3S)-3-isopropylmalate = (2S)-2-isopropylmalate. It functions in the pathway amino-acid biosynthesis; L-leucine biosynthesis; L-leucine from 3-methyl-2-oxobutanoate: step 2/4. Catalyzes the isomerization between 2-isopropylmalate and 3-isopropylmalate, via the formation of 2-isopropylmaleate. The polypeptide is 3-isopropylmalate dehydratase small subunit (leuD) (Streptomyces coelicolor (strain ATCC BAA-471 / A3(2) / M145)).